Consider the following 441-residue polypeptide: Putative collagenous domain-containing protein R238 (441 aa).

The region spanning 164-199 (GCKGEKGIKGELGPKGNTGQKGDIGSKGDRGDKGEP) is the Collagen-like domain. Positions 171–198 (IKGELGPKGNTGQKGDIGSKGDRGDKGE) are disordered. Residues 187–198 (IGSKGDRGDKGE) are compositionally biased toward basic and acidic residues.

The chain is Putative collagenous domain-containing protein R238 from Acanthamoeba polyphaga (Amoeba).